A 79-amino-acid polypeptide reads, in one-letter code: Cytochrome b (79 aa).

A run of 3 helical transmembrane segments spans residues 1-7, 31-52, and 67-79; these read TALLLAA, WLIR…YLHI, and WNIG…TLMA. Histidine 37 and histidine 51 together coordinate heme b.

This sequence belongs to the cytochrome b family. In terms of assembly, the cytochrome bc1 complex contains 11 subunits: 3 respiratory subunits (MT-CYB, CYC1 and UQCRFS1), 2 core proteins (UQCRC1 and UQCRC2) and 6 low-molecular weight proteins (UQCRH/QCR6, UQCRB/QCR7, UQCRQ/QCR8, UQCR10/QCR9, UQCR11/QCR10 and a cleavage product of UQCRFS1). This cytochrome bc1 complex then forms a dimer. Heme b is required as a cofactor.

The protein localises to the mitochondrion inner membrane. Component of the ubiquinol-cytochrome c reductase complex (complex III or cytochrome b-c1 complex) that is part of the mitochondrial respiratory chain. The b-c1 complex mediates electron transfer from ubiquinol to cytochrome c. Contributes to the generation of a proton gradient across the mitochondrial membrane that is then used for ATP synthesis. The protein is Cytochrome b (MT-CYB) of Pomatostomus superciliosus (White-browed babbler).